A 299-amino-acid chain; its full sequence is tRNA dimethylallyltransferase (299 aa).

An ATP-binding site is contributed by 22–29 (GPTASGKT). A substrate-binding site is contributed by 24–29 (TASGKT). Interaction with substrate tRNA stretches follow at residues 47 to 50 (DSRQ) and 172 to 176 (QRLLR).

The protein belongs to the IPP transferase family. As to quaternary structure, monomer. It depends on Mg(2+) as a cofactor.

The catalysed reaction is adenosine(37) in tRNA + dimethylallyl diphosphate = N(6)-dimethylallyladenosine(37) in tRNA + diphosphate. In terms of biological role, catalyzes the transfer of a dimethylallyl group onto the adenine at position 37 in tRNAs that read codons beginning with uridine, leading to the formation of N6-(dimethylallyl)adenosine (i(6)A). The sequence is that of tRNA dimethylallyltransferase from Endomicrobium trichonymphae.